Consider the following 221-residue polypeptide: Sugar transporter SWEET1 (221 aa).

7 helical membrane passes run 3-23 (AGGF…LGMF), 42-62 (VQFL…SYGA), 68-88 (ILIV…LAYL), 96-116 (VVLL…GYFW), 129-149 (LGLF…ADLA), 160-180 (LSYP…LYGF), and 186-206 (YIMV…WLFW). Residues 10–94 (LIYGACVVFT…LAYLHYCPRK (85 aa)) form the MtN3/slv 1 domain. Residues 127 to 212 (QQLGLFCSVF…WLFWKYPQEQ (86 aa)) enclose the MtN3/slv 2 domain. The tract at residues 149-221 (AKVIQTKSTQ…QDRNYWLLQT (73 aa)) is mediates interaction with TRPV2.

This sequence belongs to the SWEET sugar transporter family. In terms of assembly, interacts with TRPV2; the interaction probably occurs intracellularly and depends on TRPV2 N-glycosylation. Ubiquitously expressed with highest expression in oviduct, epididymis and intestine.

It is found in the golgi apparatus membrane. It localises to the cell membrane. Its function is as follows. Mediates sugar transport across membranes. May stimulate V(D)J recombination by the activation of RAG1. The chain is Sugar transporter SWEET1 (SLC50A1) from Homo sapiens (Human).